An 88-amino-acid polypeptide reads, in one-letter code: uncharacterized protein (88 aa).

The next 2 membrane-spanning stretches (helical) occupy residues 13-33 and 62-82; these read FLAF…GWGP and WFNI…ITGI.

The protein resides in the cell membrane. This is an uncharacterized protein from Bacillus subtilis (strain 168).